Here is a 194-residue protein sequence, read N- to C-terminus: Phosphoheptose isomerase (194 aa).

The region spanning 37–194 (ISNSFKQGGK…LIEFEMAKQA (158 aa)) is the SIS domain. A substrate-binding site is contributed by 52–54 (NGG). 2 residues coordinate Zn(2+): His-61 and Glu-65. Substrate contacts are provided by residues Glu-65, 93–94 (ND), 119–121 (STS), Ser-124, and Gln-172. Zn(2+)-binding residues include Gln-172 and His-180.

It belongs to the SIS family. GmhA subfamily. Homotetramer. Zn(2+) is required as a cofactor.

The protein localises to the cytoplasm. It catalyses the reaction 2 D-sedoheptulose 7-phosphate = D-glycero-alpha-D-manno-heptose 7-phosphate + D-glycero-beta-D-manno-heptose 7-phosphate. It functions in the pathway carbohydrate biosynthesis; D-glycero-D-manno-heptose 7-phosphate biosynthesis; D-glycero-alpha-D-manno-heptose 7-phosphate and D-glycero-beta-D-manno-heptose 7-phosphate from sedoheptulose 7-phosphate: step 1/1. Catalyzes the isomerization of sedoheptulose 7-phosphate in D-glycero-D-manno-heptose 7-phosphate. This chain is Phosphoheptose isomerase, found in Haemophilus influenzae (strain PittGG).